The following is a 314-amino-acid chain: Vacuolar membrane protein SCY_4732 (314 aa).

A disordered region spans residues 32–61 (KPTSSVVSETSSKSLPSLTSSAFSTSSGTT). The chain crosses the membrane as a helical span at residues 93 to 113 (VYIAVGAVIGAIFISILIWWL). 3 positions are modified to phosphoserine: serine 148, serine 254, and serine 274. A disordered region spans residues 240 to 309 (EERKLNLNRP…PSMFLDDVLN (70 aa)). Over residues 254–269 (SPERKEKKINSMEGYH) the composition is skewed to basic and acidic residues.

Belongs to the PRM5 family.

The protein resides in the vacuole membrane. The sequence is that of Vacuolar membrane protein SCY_4732 from Saccharomyces cerevisiae (strain YJM789) (Baker's yeast).